We begin with the raw amino-acid sequence, 217 residues long: uncharacterized protein (217 aa).

Residues 98 to 203 (QRRQYVRTDA…GDQQALLQYC (106 aa)) enclose the PilZ domain.

This is an uncharacterized protein from Bacillus subtilis (strain 168).